The sequence spans 150 residues: Probable FKBP-type 16 kDa peptidyl-prolyl cis-trans isomerase (150 aa).

The region spanning 14 to 88 (NTEVTLHFAL…PNPQNVQIIP (75 aa)) is the PPIase FKBP-type domain.

It belongs to the FKBP-type PPIase family.

The catalysed reaction is [protein]-peptidylproline (omega=180) = [protein]-peptidylproline (omega=0). PPIases accelerate the folding of proteins. This chain is Probable FKBP-type 16 kDa peptidyl-prolyl cis-trans isomerase (yaaD), found in Pseudomonas fluorescens.